A 95-amino-acid chain; its full sequence is Co-chaperonin GroES (95 aa).

It belongs to the GroES chaperonin family. In terms of assembly, heptamer of 7 subunits arranged in a ring. Interacts with the chaperonin GroEL.

The protein localises to the cytoplasm. Together with the chaperonin GroEL, plays an essential role in assisting protein folding. The GroEL-GroES system forms a nano-cage that allows encapsulation of the non-native substrate proteins and provides a physical environment optimized to promote and accelerate protein folding. GroES binds to the apical surface of the GroEL ring, thereby capping the opening of the GroEL channel. This is Co-chaperonin GroES from Chlorobaculum tepidum (strain ATCC 49652 / DSM 12025 / NBRC 103806 / TLS) (Chlorobium tepidum).